Reading from the N-terminus, the 65-residue chain is Large ribosomal subunit protein bL35 (65 aa).

A disordered region spans residues 1 to 46 (MPKMKTRQSAAKRYEVTGSGKLRRRRAGKNHLLQHKSAARKRSLST). Positions 21–44 (KLRRRRAGKNHLLQHKSAARKRSL) are enriched in basic residues.

The protein belongs to the bacterial ribosomal protein bL35 family.

The chain is Large ribosomal subunit protein bL35 from Gloeobacter violaceus (strain ATCC 29082 / PCC 7421).